The primary structure comprises 235 residues: uncharacterized protein (235 aa).

The next 2 membrane-spanning stretches (helical) occupy residues 167 to 187 (AFKL…LNEL) and 190 to 210 (LFAY…LLLW).

Its subcellular location is the membrane. This is an uncharacterized protein from Saccharomyces cerevisiae (strain ATCC 204508 / S288c) (Baker's yeast).